The following is a 149-amino-acid chain: UPF0336 protein CMM_2793 (149 aa).

One can recognise a MaoC-like domain in the interval 16 to 117 (APYLVGREKV…TVTKVATLGG (102 aa)).

Belongs to the UPF0336 family.

This is UPF0336 protein CMM_2793 from Clavibacter michiganensis subsp. michiganensis (strain NCPPB 382).